A 507-amino-acid chain; its full sequence is Putative pentatricopeptide repeat-containing protein At3g16710, mitochondrial (507 aa).

The N-terminal 48 residues, 1 to 48 (MRRSIATGFASIVKGFHLHSHRHRLQISNPRTAASLSLCGFCFWIRAF), are a transit peptide targeting the mitochondrion. 13 PPR repeats span residues 47–81 (AFSS…RPLP), 82–116 (SIID…GIPP), 117–151 (LLCT…GFEP), 152–186 (DLVT…GFKP), 187–221 (NVVT…GSRP), 222–256 (NVVT…RIEP), 257–291 (NVIT…SVYP), 292–326 (DVFT…GCYP), 327–361 (NEVI…GVVA), 362–396 (NTIT…RAPP), 397–431 (DIRT…EMDI), 432–466 (NIVT…GMKP), and 467–501 (NVIT…GFLP).

The protein belongs to the PPR family. P subfamily.

Its subcellular location is the mitochondrion. The chain is Putative pentatricopeptide repeat-containing protein At3g16710, mitochondrial from Arabidopsis thaliana (Mouse-ear cress).